The sequence spans 82 residues: Diptericin-A (82 aa).

Disordered stretches follow at residues 1–32 (DEKP…DGFG) and 45–69 (DNGG…GNSR). The residue at position 82 (F82) is a Phenylalanine amide.

It belongs to the attacin/sarcotoxin-2 family.

The protein localises to the secreted. Functionally, antimicrobial peptide required to resist Gram-negative bacterial infections, regulated by Dredd. The sequence is that of Diptericin-A from Protophormia terraenovae (Northern blowfly).